We begin with the raw amino-acid sequence, 423 residues long: 3-phosphoshikimate 1-carboxyvinyltransferase (423 aa).

3-phosphoshikimate is bound by residues K21, S22, and R26. K21 is a binding site for phosphoenolpyruvate. Residues G93 and R123 each contribute to the phosphoenolpyruvate site. 3-phosphoshikimate is bound by residues S168, S169, Q170, S196, D311, and K338. Q170 contributes to the phosphoenolpyruvate binding site. D311 serves as the catalytic Proton acceptor. Residues R342, R383, and K408 each coordinate phosphoenolpyruvate.

Belongs to the EPSP synthase family. Monomer.

Its subcellular location is the cytoplasm. It catalyses the reaction 3-phosphoshikimate + phosphoenolpyruvate = 5-O-(1-carboxyvinyl)-3-phosphoshikimate + phosphate. It participates in metabolic intermediate biosynthesis; chorismate biosynthesis. Functionally, catalyzes the transfer of the enolpyruvyl moiety of phosphoenolpyruvate (PEP) to the 5-hydroxyl of shikimate-3-phosphate (S3P) to produce enolpyruvyl shikimate-3-phosphate and inorganic phosphate. This chain is 3-phosphoshikimate 1-carboxyvinyltransferase, found in Methanosphaerula palustris (strain ATCC BAA-1556 / DSM 19958 / E1-9c).